A 198-amino-acid polypeptide reads, in one-letter code: Calcium channel flower (198 aa).

Helical transmembrane passes span leucine 36–isoleucine 56, isoleucine 67–glutamate 89, and alanine 114–phenylalanine 134.

Belongs to the calcium channel flower family. Homomultimer. Associates with the dally/ magu complex.

Its subcellular location is the cell membrane. The protein localises to the cytoplasmic vesicle. It localises to the secretory vesicle. The protein resides in the synaptic vesicle membrane. It is found in the presynaptic cell membrane. Its subcellular location is the endosome. With respect to regulation, channel activity is inhibited by La(3+), which reduces Ca(2+) influx and thus inhibits it's function in promoting activity-dependent bulk endocytosis (ADBE) in response to high stimuli. Transmembrane protein which mediates synaptic endocytosis, fitness-based cell culling, neuronal culling, morphogen gradient scaling, and calcium transport. Regulates synaptic endocytosis and hence couples exo- with endocytosis. Controls two major modes of synaptic vesicle (SV) endocytosis in the synaptic boutons of neuromuscular junctions (NMJs); Ca(2+) channel-independent Clathrin-mediated endocytosis (CME) in response to mild stimulation, and Ca(2+) channel-dependent activity-dependent bulk endocytosis (ADBE) in response to strong stimulation. Functions in ADBE and subsequent SV reformation from bulk endosomes by initiating Ca(2+) channel-dependent phosphatidylinositol 4,5-bisphosphate (PtdIns(4,5)P2) compartmentalization in synaptic boutons. There it acts at the periactive zone to provide the low Ca(2+) levels required to initiate Calcineurin activation and upregulate PtdIns(4,5)P2. Conversely PtdIns(4,5)P2 enhances fwe Ca(2+) channel-activity, establishing a positive feedback loop that induces PtdIns(4,5)P2 microdomain at the periactive zone. These microdomains trigger bulk membrane invagination (i.e. ADBE) by triggering actin polymerization while also promoting localization of fwe to bulk endosomes, thereby removing the ADBE trigger to reduce endocytosis and prevent excess membrane uptake. PtdIns(4,5)P2 then promotes SV reformation from the bulk endosomes, to coordinate ADBE and subsequent SV reformation. Different combinations of the flower isoforms at the cell membrane are also required for the identification and elimination of suboptimal or supernumerary cells during development, regeneration, and adulthood. Required for the recognition and elimination of unfit cells in the developing wing during cell competition. In the developing pupal retina, mediates the elimination of unwanted postmitotic neurons, including supernumerary photoreceptor neurons that form at the periphery of the retina and are contained within incomplete ommatidia units. Also required for efficient elimination and replacement of old neurons by newly generated neurons during regeneration in the adult brain following mechanical injury. Downstream of the flower fitness fingerprints, cells identified as unwanted or unfit are eliminated via apoptosis through the expression of ahuizotl (azot). However, the cells marked for elimination by the flower isoforms only undergo apoptosis if additional thresholds are met; (1) their neighboring fit/healthy cells express different levels of the fwe isoforms, and (2) the levels of the protective signal SPARC expressed by the loser or unwanted cells are unable to inhibit caspase activation. These additional thresholds for flower-mediated apoptosis, allows useful cells to recover from transient and limited stress before they are unnecessarily eliminated. Functions with dally and magu in a mechanism of scaling, which utilises apoptosis to ensure that the dpp morphogen gradient, which mediates organ growth, remains proportional to the size of the growing wing. In this mechanism, fwe represses dally- and Magu-dependent activity in expanding the gradient, and dally/Magu inhibits fwe-dependent apoptosis to keep cell death rate low. When the levels of these different proteins are optimally regulated the gradient correctly scales with organ growth but when this fails, fwe-mediated apoptosis is activated to trim the developing tissue to match the correct size of the gradient. This chain is Calcium channel flower, found in Drosophila persimilis (Fruit fly).